Consider the following 637-residue polypeptide: MKVKAPILLLFVFLINFCFSIKQTQQQNFDITIDNNNYNNNNNNNKNEIINNNNKNNNNLNDEYFEKLGYDTNGTKCDICKFGINQVQKMIASKQGIEDISKYAIDLCTYLHIEKAEVCNGLIPLFANMTYNVLSYPTVTGEYVCGFVGFCPYVPRNSSNIINFPKPKPPHVPPVAPSPNSPTMKILHISDIHVDPVYESGMNADCGEPLCCRAPNGPGVGEKAAGEWGHYLCDINMKMVESMFEFIDQEFGEDIDIVFWTGDNPPHDIWEQTYDSQINASQLVTNLVKKYFGSTAKVFPAIGNHESLPVNSFPLPPGSSWIFNALSYDWSDWVNVDEQVANLQYGGYYTLPVQSGLRVISLNMNWCNNGNLYLAENSTDPANMLQWIVDTLQASEDIGEKVYLVGHIPPGIPDCIDSWSEQLLQIVNRYEDTILASFYGHTHRDEFSVYYTQSDENDPSSPMRASNVIYTTPSVTTYQHQNPSFRIFTVDSNTGYLMESSTYHTDLSQANLNGKPTWLLEYNTTNTYNIPNLTPISMDLAIQNINSSNSMLEDYHVHYYSASPYPESKPCTSISCKLDYICKMKSAAYLKYYECIHHEVNNYLLNESDDDSIKSHKKLNILLDLNNYLNNEVLKSC.

The first 20 residues, 1 to 20 (MKVKAPILLLFVFLINFCFS), serve as a signal peptide directing secretion. N-linked (GlcNAc...) asparagine glycosylation is present at Asn-73. The Saposin B-type domain occupies 73 to 155 (NGTKCDICKF…GFVGFCPYVP (83 aa)). 3 cysteine pairs are disulfide-bonded: Cys-77/Cys-151, Cys-80/Cys-145, and Cys-108/Cys-119. N-linked (GlcNAc...) asparagine glycans are attached at residues Asn-128 and Asn-157. The Zn(2+) site is built by Asp-191 and His-193. An intrachain disulfide couples Cys-212 to Cys-233. Asp-263 provides a ligand contact to Zn(2+). Asn-279 carries an N-linked (GlcNAc...) asparagine glycan. Position 304 (Asn-304) interacts with Zn(2+). N-linked (GlcNAc...) asparagine glycosylation occurs at Asn-377. Residues His-407, His-441, and His-443 each coordinate Zn(2+). N-linked (GlcNAc...) asparagine glycosylation is found at Asn-523 and Asn-546. The cysteines at positions 582 and 595 are disulfide-linked. Residue Asn-606 is glycosylated (N-linked (GlcNAc...) asparagine).

Belongs to the acid sphingomyelinase family. It depends on Zn(2+) as a cofactor.

It localises to the secreted. Functionally, converts sphingomyelin to ceramide. The protein is Sphingomyelin phosphodiesterase B (sgmB) of Dictyostelium discoideum (Social amoeba).